The chain runs to 168 residues: Ribosome maturation factor RimM (168 aa).

The PRC barrel domain maps to Lys-95–Tyr-168.

This sequence belongs to the RimM family. Binds ribosomal protein uS19.

Its subcellular location is the cytoplasm. An accessory protein needed during the final step in the assembly of 30S ribosomal subunit, possibly for assembly of the head region. Essential for efficient processing of 16S rRNA. May be needed both before and after RbfA during the maturation of 16S rRNA. It has affinity for free ribosomal 30S subunits but not for 70S ribosomes. The protein is Ribosome maturation factor RimM of Nitrosomonas eutropha (strain DSM 101675 / C91 / Nm57).